The chain runs to 145 residues: 3-hydroxyacyl-[acyl-carrier-protein] dehydratase FabZ (145 aa).

Residue His-51 is part of the active site.

This sequence belongs to the thioester dehydratase family. FabZ subfamily.

It localises to the cytoplasm. The catalysed reaction is a (3R)-hydroxyacyl-[ACP] = a (2E)-enoyl-[ACP] + H2O. Involved in unsaturated fatty acids biosynthesis. Catalyzes the dehydration of short chain beta-hydroxyacyl-ACPs and long chain saturated and unsaturated beta-hydroxyacyl-ACPs. The chain is 3-hydroxyacyl-[acyl-carrier-protein] dehydratase FabZ from Macrococcus caseolyticus (strain JCSC5402) (Macrococcoides caseolyticum).